Consider the following 92-residue polypeptide: MLDLISRVFGRDHSSADIARERLRLVLVHDRTNVSPQFLETLKEELIEVISRYMEIEEEGMDVTLQTAENQVALVANIPVRRMKRAAVGSKR.

This sequence belongs to the MinE family.

Functionally, prevents the cell division inhibition by proteins MinC and MinD at internal division sites while permitting inhibition at polar sites. This ensures cell division at the proper site by restricting the formation of a division septum at the midpoint of the long axis of the cell. This is Cell division topological specificity factor from Symbiobacterium thermophilum (strain DSM 24528 / JCM 14929 / IAM 14863 / T).